The primary structure comprises 126 residues: Glycine cleavage system H protein (126 aa).

The region spanning Ile-22–Lys-104 is the Lipoyl-binding domain. Residue Lys-63 is modified to N6-lipoyllysine.

It belongs to the GcvH family. In terms of assembly, the glycine cleavage system is composed of four proteins: P, T, L and H. (R)-lipoate is required as a cofactor.

Functionally, the glycine cleavage system catalyzes the degradation of glycine. The H protein shuttles the methylamine group of glycine from the P protein to the T protein. This Bacteroides thetaiotaomicron (strain ATCC 29148 / DSM 2079 / JCM 5827 / CCUG 10774 / NCTC 10582 / VPI-5482 / E50) protein is Glycine cleavage system H protein.